The chain runs to 63 residues: 2-hydroxymuconate tautomerase (63 aa).

Catalysis depends on Pro2, which acts as the Proton acceptor; via imino nitrogen.

Belongs to the 4-oxalocrotonate tautomerase family. In terms of assembly, homohexamer.

It carries out the reaction (2Z,4E)-2-hydroxyhexa-2,4-dienedioate = (3E)-2-oxohex-3-enedioate. The protein operates within xenobiotic degradation; toluene degradation. Functionally, catalyzes the ketonization of 2-hydroxymuconate stereoselectively to yield 2-oxo-3-hexenedioate. This Pseudomonas sp. (strain CF600) protein is 2-hydroxymuconate tautomerase (dmpI).